The primary structure comprises 220 residues: Nicotinamidase (220 aa).

Residue Asp11 is part of the active site. Zn(2+) is bound by residues Asp53, His55, and His94. Lys119 is a catalytic residue. Cys163 (nucleophile) is an active-site residue.

It belongs to the isochorismatase family.

The protein resides in the cytoplasm. It localises to the nucleus. The protein localises to the peroxisome. It catalyses the reaction nicotinamide + H2O = nicotinate + NH4(+). The protein operates within cofactor biosynthesis; nicotinate biosynthesis; nicotinate from nicotinamide: step 1/1. Catalyzes the deamidation of nicotinamide, an early step in the NAD(+) salvage pathway. This Schizosaccharomyces pombe (strain 972 / ATCC 24843) (Fission yeast) protein is Nicotinamidase (pnc1).